The following is a 360-amino-acid chain: Phospho-N-acetylmuramoyl-pentapeptide-transferase (360 aa).

10 helical membrane-spanning segments follow: residues 21-41 (YLTLRGILGILTALVISFIVG), 70-90 (GTPTMGGALILVTITVSTLLW), 97-117 (YVWAVLLVTLAYGLIGFVDDY), 134-154 (YLWQSVFGLGAALFLYHTASS), 168-188 (VVLNMGWLYVPLVYFVVVGSS), 199-219 (GLAILPTVLVAGGLAIFAYAS), 236-256 (AGELVVFCGALVGAGLGFLWF), 263-283 (VFMGDIGALALGAALGMVAVL), 288-308 (IVLMIMGGIFVMETVSVMLQV), and 338-358 (VIVRFWIISVILVLIGLATLK).

This sequence belongs to the glycosyltransferase 4 family. MraY subfamily. Mg(2+) is required as a cofactor.

Its subcellular location is the cell inner membrane. It carries out the reaction UDP-N-acetyl-alpha-D-muramoyl-L-alanyl-gamma-D-glutamyl-meso-2,6-diaminopimeloyl-D-alanyl-D-alanine + di-trans,octa-cis-undecaprenyl phosphate = di-trans,octa-cis-undecaprenyl diphospho-N-acetyl-alpha-D-muramoyl-L-alanyl-D-glutamyl-meso-2,6-diaminopimeloyl-D-alanyl-D-alanine + UMP. Its pathway is cell wall biogenesis; peptidoglycan biosynthesis. Catalyzes the initial step of the lipid cycle reactions in the biosynthesis of the cell wall peptidoglycan: transfers peptidoglycan precursor phospho-MurNAc-pentapeptide from UDP-MurNAc-pentapeptide onto the lipid carrier undecaprenyl phosphate, yielding undecaprenyl-pyrophosphoryl-MurNAc-pentapeptide, known as lipid I. The polypeptide is Phospho-N-acetylmuramoyl-pentapeptide-transferase (Methylococcus capsulatus (strain ATCC 33009 / NCIMB 11132 / Bath)).